Reading from the N-terminus, the 227-residue chain is PKHD-type hydroxylase azo0608 (227 aa).

Residues 78-178 form the Fe2OG dioxygenase domain; it reads RVLTPFFNRY…RVACFMFMQS (101 aa). 3 residues coordinate Fe cation: histidine 97, aspartate 99, and histidine 159. Arginine 169 lines the 2-oxoglutarate pocket.

It depends on Fe(2+) as a cofactor. The cofactor is L-ascorbate.

The chain is PKHD-type hydroxylase azo0608 from Azoarcus sp. (strain BH72).